A 297-amino-acid polypeptide reads, in one-letter code: Golgi-associated RAB2 interactor protein 1A (297 aa).

Residues 226–257 (SNRHQTSRDRHTDTATETDNSGNCKSTPLVAS) form a disordered region. Residues 240–257 (ATETDNSGNCKSTPLVAS) show a composition bias toward polar residues.

It belongs to the GARIN family. As to quaternary structure, interacts (via N-terminus) with RAB2B (in GTP-bound form). As to expression, expressed in testis (at protein level).

The protein resides in the golgi apparatus. Its function is as follows. RAB2B effector protein required for accurate acrosome formation and normal male fertility. The polypeptide is Golgi-associated RAB2 interactor protein 1A (Mus musculus (Mouse)).